A 180-amino-acid polypeptide reads, in one-letter code: Pro-glucagon (180 aa).

The N-terminal stretch at 1–20 is a signal peptide; sequence MKTIYFVAGLLIMLVQGSWQ. The tract at residues 25-58 is disordered; that stretch reads DTEENPRSFPASQTEAHEDPDEMNEDKRHSQGTF. Residue S54 is modified to Phosphoserine. The propeptide occupies 84-89; sequence NRNNIA. A phosphoserine mark is found at S105 and S108. R127 is subject to Arginine amide. A propeptide spanning residues 131–145 is cleaved from the precursor; that stretch reads DFPEEVAIAEELGRR. S150 and S152 each carry phosphoserine.

It belongs to the glucagon family. Post-translationally, proglucagon is post-translationally processed in a tissue-specific manner in pancreatic A cells and intestinal L cells. In pancreatic A cells, the major bioactive hormone is glucagon cleaved by PCSK2/PC2. In the intestinal L cells PCSK1/PC1 liberates GLP-1, GLP-2, glicentin and oxyntomodulin. GLP-1 is further N-terminally truncated by post-translational processing in the intestinal L cells resulting in GLP-1(7-37) GLP-1-(7-36)amide. The C-terminal amidation is neither important for the metabolism of GLP-1 nor for its effects on the endocrine pancreas. In terms of tissue distribution, secreted in the A cells of the islets of Langerhans. As to expression, secreted in the A cells of the islets of Langerhans. Secreted from enteroendocrine L cells throughout the gastrointestinal tract. Also secreted in selected neurons in the brain. Secreted from enteroendocrine cells throughout the gastrointestinal tract. Also secreted in selected neurons in the brain. In terms of tissue distribution, secreted from enteroendocrine cells throughout the gastrointestinal tract.

The protein resides in the secreted. Its function is as follows. Plays a key role in glucose metabolism and homeostasis. Regulates blood glucose by increasing gluconeogenesis and decreasing glycolysis. A counterregulatory hormone of insulin, raises plasma glucose levels in response to insulin-induced hypoglycemia. Plays an important role in initiating and maintaining hyperglycemic conditions in diabetes. In terms of biological role, potent stimulator of glucose-dependent insulin release. Also stimulates insulin release in response to IL6. Plays important roles on gastric motility and the suppression of plasma glucagon levels. May be involved in the suppression of satiety and stimulation of glucose disposal in peripheral tissues, independent of the actions of insulin. Has growth-promoting activities on intestinal epithelium. May also regulate the hypothalamic pituitary axis (HPA) via effects on LH, TSH, CRH, oxytocin, and vasopressin secretion. Increases islet mass through stimulation of islet neogenesis and pancreatic beta cell proliferation. Inhibits beta cell apoptosis. Stimulates intestinal growth and up-regulates villus height in the small intestine, concomitant with increased crypt cell proliferation and decreased enterocyte apoptosis. The gastrointestinal tract, from the stomach to the colon is the principal target for GLP-2 action. Plays a key role in nutrient homeostasis, enhancing nutrient assimilation through enhanced gastrointestinal function, as well as increasing nutrient disposal. Stimulates intestinal glucose transport and decreases mucosal permeability. Functionally, significantly reduces food intake. Inhibits gastric emptying in humans. Suppression of gastric emptying may lead to increased gastric distension, which may contribute to satiety by causing a sensation of fullness. Its function is as follows. May modulate gastric acid secretion and the gastro-pyloro-duodenal activity. May play an important role in intestinal mucosal growth in the early period of life. In Mus musculus (Mouse), this protein is Pro-glucagon (Gcg).